A 174-amino-acid chain; its full sequence is UPF0316 protein lmo1776 (174 aa).

The next 3 helical transmembrane spans lie at 4–24 (GIFI…IYTV), 36–56 (LAAL…SLVL), and 62–82 (IANV…GMKI).

The protein belongs to the UPF0316 family.

It localises to the cell membrane. The polypeptide is UPF0316 protein lmo1776 (Listeria monocytogenes serovar 1/2a (strain ATCC BAA-679 / EGD-e)).